The following is a 299-amino-acid chain: Heat stress transcription factor B-2a (299 aa).

Residues 21–115 (PTPFLTKTFN…LLREIQRRKI (95 aa)) mediate DNA binding. The disordered stretch occupies residues 119 to 157 (HQTVVAPSSEQRNQTMVVSPSNSGEDNNNNQVMSSSPSS). Residues 166 to 211 (TGNGGLSVELLEENEKLRSQNIQLNRELTQMKSICDNIYSLMSNYV) are hydrophobic repeat HR-A/B. The Nuclear localization signal motif lies at 261–264 (KRTR).

This sequence belongs to the HSF family. Class B subfamily. As to quaternary structure, homotrimer. In terms of processing, exhibits temperature-dependent phosphorylation.

It is found in the nucleus. In terms of biological role, transcriptional regulator that specifically binds DNA sequence 5'-AGAAnnTTCT-3' known as heat shock promoter elements (HSE). The polypeptide is Heat stress transcription factor B-2a (HSFB2A) (Arabidopsis thaliana (Mouse-ear cress)).